The sequence spans 517 residues: FAD-dependent monooxygenase dmxR9 (517 aa).

Val96 and Arg162 together coordinate FAD. Residues Arg243 and Tyr270 contribute to the active site. The FAD site is built by Asp365 and Ala378.

It belongs to the paxM FAD-dependent monooxygenase family. The cofactor is FAD.

It functions in the pathway secondary metabolite biosynthesis. FAD-dependent monooxygenase; part of the gene cluster that mediates the biosynthesis of the dimeric xanthones cryptosporioptides. The pathway begins with the synthesis of atrochrysone thioester by the polyketide synthase dmx-nrPKS. The atrochrysone carboxyl ACP thioesterase dmxR1 then breaks the thioester bond and releases the atrochrysone carboxylic acid from dmx-nrPKS. Atrochrysone carboxylic acid is decarboxylated by the decarboxylase dmxR15, and oxidized by the anthrone oxygenase dmxR16 to yield emodin. Emodin is then reduced to emodin hydroquinone by the oxidoreductase dmxR7. A-ring reduction by the short chain dehydrogenase dmxR18, dehydration by the scytalone dehydratase-like protein dmxR17 and probable spontaneous re-oxidation, results in overall deoxygenation to chrysophanol. Baeyer-Villiger oxidation by the Baeyer-Villiger monooxygenase (BVMO) dmxR6 then yields monodictylactone in equilibrium with monodictyphenone. In the case of the cryptosporioptides biosynthesis, monodictylactone is reduced at C-12 to an alcohol (by the short chain dehydrogenases dmxR12 or dmxR8) and hydroxylated at C-5 by dmxR9, yielding the electron-rich aromatic which could eliminate H(2)O to form the ortho-quinonemethide, followed by tautomerisation to paraquinone and complete the formal reduction to produce the 10-methylgroup. Conjugate addition of C-4a-OH to the resulting paraquinone by the monooxygenase dmxR10 then gives cyclohexadienone, which is then reduced at C-5 by the short chain dehydrogenase dmxR3 to give the dihydroxanthone. The 6,7-epoxide in the cryptosporioptides could be introduced by the cytochrome P450 monooxygenase dmxL3. The highly reducing PKS dmxL2 manufactures butyrate, which is further carboxylated by dmxL1 to form ethylmalonate. It is not yet clear whether the carboxylation occurs while the butyrate is attached to the ACP of dmxL2, but this unusual fungal metabolite could then be esterified to O-5 by the O-acetyltransferase dmxR13. Finally, dimerization performed by dmxR5 gives the observed dimers cryptosporioptides A, B and C as the final products of the pathway. In Cryptosporiopsis sp. (strain 8999), this protein is FAD-dependent monooxygenase dmxR9.